A 255-amino-acid polypeptide reads, in one-letter code: Dehydrogenase/reductase SDR family member 11 (255 aa).

A signal peptide spans 1–23; sequence MERWTGRVALVTGASVGIGAAVA. NADP(+) is bound by residues 13–18, 38–39, E44, 65–66, and N92; these read GASVGI, RS, and DL. S146 and Y161 together coordinate substrate. NADP(+)-binding positions include Y161, K165, 196–199, and K203; that span reads VETG. Y161 acts as the Proton acceptor in catalysis.

Belongs to the short-chain dehydrogenases/reductases (SDR) family.

It localises to the secreted. It catalyses the reaction a 3beta-hydroxysteroid + NADP(+) = a 3-oxosteroid + NADPH + H(+). The enzyme catalyses 17beta-estradiol + NAD(+) = estrone + NADH + H(+). It carries out the reaction 17beta-estradiol + NADP(+) = estrone + NADPH + H(+). The protein operates within steroid biosynthesis; estrogen biosynthesis. With respect to regulation, inhibited by flavonoids including apigenin, luteolin, genistein, kaempferol and quercetin and also by carbenoxolone, zearalenone, glycyrrhetinic, curcumin and flufenamic acid. In terms of biological role, catalyzes the conversion of the 17-keto group of estrone, 4- and 5-androstenes and 5-alpha-androstanes into their 17-beta-hydroxyl metabolites and the conversion of the 3-keto group of 3-, 3,17- and 3,20- diketosteroids into their 3-hydroxyl metabolites. Exhibits reductive 3-beta-hydroxysteroid dehydrogenase activity toward 5-beta-androstanes, 5-beta-pregnanes, 4-pregnenes and bile acids. May also reduce endogenous and exogenous alpha-dicarbonyl compounds and xenobiotic alicyclic ketones. This is Dehydrogenase/reductase SDR family member 11 (DHRS11) from Gallus gallus (Chicken).